Consider the following 176-residue polypeptide: N-alpha-acetyltransferase NAT5 (176 aa).

The region spanning 14–176 (NNLGMLTKLA…DAILLKKHIS (163 aa)) is the N-acetyltransferase domain.

The protein belongs to the acetyltransferase family. In terms of assembly, component of the N-terminal acetyltransferase A (NatA) complex, which is composed of ARD1, NAT1 and NAT5.

It localises to the cytoplasm. It catalyses the reaction N-terminal L-methionyl-L-alanyl-[protein] + acetyl-CoA = N-terminal N(alpha)-acetyl-L-methionyl-L-alanyl-[protein] + CoA + H(+). It carries out the reaction N-terminal L-methionyl-L-seryl-[protein] + acetyl-CoA = N-terminal N(alpha)-acetyl-L-methionyl-L-seryl-[protein] + CoA + H(+). The enzyme catalyses N-terminal L-methionyl-L-valyl-[protein] + acetyl-CoA = N-terminal N(alpha)-acetyl-L-methionyl-L-valyl-[protein] + CoA + H(+). The catalysed reaction is N-terminal L-methionyl-L-threonyl-[protein] + acetyl-CoA = N-terminal N(alpha)-acetyl-L-methionyl-L-threonyl-[protein] + CoA + H(+). It catalyses the reaction N-terminal L-methionyl-L-lysyl-[protein] + acetyl-CoA = N-terminal N(alpha)-acetyl-L-methionyl-L-lysyl-[protein] + CoA + H(+). It carries out the reaction N-terminal L-methionyl-L-leucyl-[protein] + acetyl-CoA = N-terminal N(alpha)-acetyl-L-methionyl-L-leucyl-[protein] + CoA + H(+). The enzyme catalyses N-terminal L-methionyl-L-phenylalanyl-[protein] + acetyl-CoA = N-terminal N(alpha)-acetyl-L-methionyl-L-phenylalanyl-[protein] + CoA + H(+). The catalysed reaction is N-terminal L-methionyl-L-tyrosyl-[protein] + acetyl-CoA = N-terminal N(alpha)-acetyl-L-methionyl-L-tyrosyl-[protein] + CoA + H(+). In terms of biological role, N-alpha-acetyltransferase that acetylates the N-terminus of proteins that retain their initiating methionine. Has a broad substrate specificity: able to acetylate the initiator methionine of most peptides. Non-essential component of the NatA N-terminal acetyltransferase. In Saccharomyces cerevisiae (strain ATCC 204508 / S288c) (Baker's yeast), this protein is N-alpha-acetyltransferase NAT5.